The following is a 675-amino-acid chain: MSHVANKLLVTCALPYANGSIHLGHILEHIQADIWVRYQRMRGKEVHFICADDAHGTPIMLKAQQLGITPEAMIEEMSKEHQQDFAGFNISYDNYHSTHSEENRQLSTKIYLALKKNGHIKSKTISQLYDEEKGMFLPDRFVKGTCPKCKAPDQYGDNCEVCGSTYSPTELINPRSVVSGSTPVMRETEHYFFDLPAFSNMLQEWIRSGALQEQVANKMQEWFDSGLQQWDITRDAPYFGFEIPDAPGKYFYVWLDAPIGYMGSFLNLCEKRGDLSFDEFWNKESKTDLYHFIGKDIVYFHSLFWPAVLEGSEYRKPTNLFVHGYVTVNGAKMSKSRGTFITARAYLDHFDADCLRYYYAAKLSSRIDDIDLNLEDFVQRVNSDIVNKVVNLASRTAGFISKRFDGKLAANLDDAKLYQHFVDMQESIAQCFENREFGKAIREIMALADEANRYIDEKAPWVVAKQEGKEAELQAICTMGINLFRVLMTYLKPILPSLTERSEAFLQTELTWNALSQPLLNHEITKFKALFNRIEMDKANAMVEASKSTIAPVKEITGPLADAPIQETIKFDDFAKIDMRIAEIKQADFVDGSDKLLKLILDLGGETRQVFSGIRSAYPDPKVLEGRLTVMVANLAPRKMRFGISEGMVMAAGPGGEDIFLLSPDSGAKPGHQVK.

The short motif at 15–25 is the 'HIGH' region element; that stretch reads PYANGSIHLGH. Residues Cys146, Cys149, Cys159, and Cys162 each coordinate Zn(2+). Residues 332–336 carry the 'KMSKS' region motif; the sequence is KMSKS. Lys335 contributes to the ATP binding site. Residues 573 to 675 form the tRNA-binding domain; the sequence is DFAKIDMRIA…SGAKPGHQVK (103 aa).

The protein belongs to the class-I aminoacyl-tRNA synthetase family. MetG type 1 subfamily. As to quaternary structure, homodimer. Requires Zn(2+) as cofactor.

The protein localises to the cytoplasm. The catalysed reaction is tRNA(Met) + L-methionine + ATP = L-methionyl-tRNA(Met) + AMP + diphosphate. In terms of biological role, is required not only for elongation of protein synthesis but also for the initiation of all mRNA translation through initiator tRNA(fMet) aminoacylation. The chain is Methionine--tRNA ligase from Proteus mirabilis (strain HI4320).